The primary structure comprises 423 residues: Adenylosuccinate synthetase (423 aa).

Residues 12 to 18 (GDEGKGK) and 40 to 42 (GHT) each bind GTP. D13 functions as the Proton acceptor in the catalytic mechanism. Positions 13 and 40 each coordinate Mg(2+). IMP is bound by residues 13 to 16 (DEGK), 38 to 41 (NAGH), T128, R142, Q223, T238, and R302. H41 functions as the Proton donor in the catalytic mechanism. 298 to 304 (TTTGRPR) provides a ligand contact to substrate. GTP-binding positions include R304, 330–332 (RLD), and 412–414 (CIG).

Belongs to the adenylosuccinate synthetase family. In terms of assembly, homodimer. Mg(2+) is required as a cofactor.

The protein resides in the cytoplasm. The catalysed reaction is IMP + L-aspartate + GTP = N(6)-(1,2-dicarboxyethyl)-AMP + GDP + phosphate + 2 H(+). Its pathway is purine metabolism; AMP biosynthesis via de novo pathway; AMP from IMP: step 1/2. Its function is as follows. Plays an important role in the de novo pathway of purine nucleotide biosynthesis. Catalyzes the first committed step in the biosynthesis of AMP from IMP. The chain is Adenylosuccinate synthetase from Dehalococcoides mccartyi (strain ATCC BAA-2266 / KCTC 15142 / 195) (Dehalococcoides ethenogenes (strain 195)).